Reading from the N-terminus, the 162-residue chain is Podoplanin (162 aa).

The N-terminal stretch at 1–22 (MWKVSALLFVLGSASLWVLAEG) is a signal peptide. The disordered stretch occupies residues 23–57 (ASTGQPEDDTETTGLEGGVAMPGAEDDVVTPGTSE). Topologically, residues 23–131 (ASTGQPEDDT…EKDGLSTVTL (109 aa)) are extracellular. 10 O-linked (GalNAc...) threonine glycosylation sites follow: threonine 25, threonine 32, threonine 34, threonine 35, threonine 52, threonine 55, threonine 65, threonine 66, threonine 76, and threonine 85. Over residues 85-108 (TSESTVHAQEQSPSATASNVATSH) the composition is skewed to polar residues. The interval 85 to 119 (TSESTVHAQEQSPSATASNVATSHSTEKVDGDTQT) is disordered. 2 O-linked (GalNAc...) serine glycosylation sites follow: serine 86 and serine 88. A glycan (O-linked (GalNAc...) threonine) is linked at threonine 89. Serine 96 and serine 98 each carry an O-linked (GalNAc...) serine glycan. Threonine 100 is a glycosylation site (O-linked (GalNAc...) threonine). A glycan (O-linked (GalNAc...) serine) is linked at serine 102. Threonine 106 carries an O-linked (GalNAc...) threonine glycan. Serine 107 and serine 109 each carry an O-linked (GalNAc...) serine glycan. Positions 109–119 (STEKVDGDTQT) are enriched in basic and acidic residues. Residues threonine 110, threonine 117, threonine 119, and threonine 120 are each glycosylated (O-linked (GalNAc...) threonine). A helical membrane pass occupies residues 132-152 (VGIIVGVLLAIGFIGAIIVVV). Residues 133–137 (GIIVG) form a requires for dimerization and lipid rafts association region. Topologically, residues 153–162 (MRKMSGRYSP) are cytoplasmic. The requires for interaction with MSN and EZR stretch occupies residues 154 to 155 (RK).

The protein belongs to the podoplanin family. Homodimer. Interacts with CLEC1B; the interaction is independent of CLEC1B glycosylation and activates CLEC1B; the interaction is dependent of sialic acid on O-glycans. Interacts with CD9; this interaction is homophilic and attenuates platelet aggregation and pulmonary metastasis induced by PDPN. Interacts with LGALS8; the interaction is glycosylation-dependent; may participate in connection of the lymphatic endothelium to the surrounding extracellular matrix. Interacts with HSPA9. Interacts (via extracellular domain) with CD44; this interaction is required for PDPN-mediated directional migration and regulation of lamellipodia extension/stabilization during cell spreading and migration. Interacts (via cytoplasmic domain) with MSN and EZR; activates RHOA and promotes epithelial-mesenchymal transition. Interacts with CCL21; relocalized PDPN to the basolateral membrane. Post-translationally, extensively O-glycosylated. Contains sialic acid residues. O-glycosylation is necessary for platelet aggregation activity. Disialylated at Thr-52; sialic acid is critical for platelet-aggregating activity and for CLEC1B interaction. The N-terminus is blocked. In terms of processing, cleaved by a metalloprotease within its extracellular (EC) domain, generating a membrane-bound C-terminal fragment (PCTF33) and an extracellular fragment. The resulting membrane-bound C-terminal fragment (PCTF33) is further processed between Val-150 and Val-151 by PSEN1/gamma-secretase generating the intracellular domain of podoplanin (PICD). Highly expressed in placenta, lung, skeletal muscle and brain. Weakly expressed in brain, kidney and liver. In placenta, expressed on the apical plasma membrane of endothelium. In lung, expressed in alveolar epithelium. Up-regulated in colorectal tumors and expressed in 25% of early oral squamous cell carcinomas.

Its subcellular location is the membrane. It is found in the cell projection. It localises to the lamellipodium membrane. The protein resides in the filopodium membrane. The protein localises to the microvillus membrane. Its subcellular location is the ruffle membrane. It is found in the membrane raft. It localises to the apical cell membrane. The protein resides in the basolateral cell membrane. The protein localises to the invadopodium. Its subcellular location is the cytoplasm. It is found in the cytosol. Its function is as follows. Mediates effects on cell migration and adhesion through its different partners. During development plays a role in blood and lymphatic vessels separation by binding CLEC1B, triggering CLEC1B activation in platelets and leading to platelet activation and/or aggregation. Interaction with CD9, on the contrary, attenuates platelet aggregation induced by PDPN. Through MSN or EZR interaction promotes epithelial-mesenchymal transition (EMT) leading to ERZ phosphorylation and triggering RHOA activation leading to cell migration increase and invasiveness. Interaction with CD44 promotes directional cell migration in epithelial and tumor cells. In lymph nodes (LNs), controls fibroblastic reticular cells (FRCs) adhesion to the extracellular matrix (ECM) and contraction of the actomyosin by maintaining ERM proteins (EZR; MSN and RDX) and MYL9 activation through association with unknown transmembrane proteins. Engagement of CLEC1B by PDPN promotes FRCs relaxation by blocking lateral membrane interactions leading to reduction of ERM proteins (EZR; MSN and RDX) and MYL9 activation. Through binding with LGALS8 may participate in connection of the lymphatic endothelium to the surrounding extracellular matrix. In keratinocytes, induces changes in cell morphology showing an elongated shape, numerous membrane protrusions, major reorganization of the actin cytoskeleton, increased motility and decreased cell adhesion. Controls invadopodia stability and maturation leading to efficient degradation of the extracellular matrix (ECM) in tumor cells through modulation of RHOC activity in order to activate ROCK1/ROCK2 and LIMK1/LIMK2 and inactivation of CFL1. Required for normal lung cell proliferation and alveolus formation at birth. Does not function as a water channel or as a regulator of aquaporin-type water channels. Does not have any effect on folic acid or amino acid transport. The protein is Podoplanin of Homo sapiens (Human).